We begin with the raw amino-acid sequence, 138 residues long: Basic phospholipase A2 PLA-B' (138 aa).

The N-terminal stretch at 1–16 (MRTLWITAVLLVGVEG) is a signal peptide. 7 disulfides stabilise this stretch: cysteine 42–cysteine 131, cysteine 44–cysteine 60, cysteine 59–cysteine 111, cysteine 65–cysteine 138, cysteine 66–cysteine 104, cysteine 73–cysteine 97, and cysteine 91–cysteine 102. 3 residues coordinate Ca(2+): tyrosine 43, glycine 45, and glycine 47. The active site involves histidine 63. Ca(2+) is bound at residue aspartate 64. Aspartate 105 is an active-site residue.

The protein belongs to the phospholipase A2 family. Group II subfamily. D49 sub-subfamily. Ca(2+) serves as cofactor. As to expression, expressed by the venom gland.

The protein resides in the secreted. It catalyses the reaction a 1,2-diacyl-sn-glycero-3-phosphocholine + H2O = a 1-acyl-sn-glycero-3-phosphocholine + a fatty acid + H(+). PLA2 catalyzes the calcium-dependent hydrolysis of the 2-acyl groups in 3-sn-phosphoglycerides. The sequence is that of Basic phospholipase A2 PLA-B' from Protobothrops flavoviridis (Habu).